We begin with the raw amino-acid sequence, 507 residues long: Methionine--tRNA ligase (507 aa).

The 'HIGH' region signature appears at 12 to 22 (YYVNDVSHIGH). The 'KMSKS' region motif lies at 295-299 (KISKS). Lysine 298 serves as a coordination point for ATP.

It belongs to the class-I aminoacyl-tRNA synthetase family. MetG type 2B subfamily. As to quaternary structure, monomer.

Its subcellular location is the cytoplasm. The catalysed reaction is tRNA(Met) + L-methionine + ATP = L-methionyl-tRNA(Met) + AMP + diphosphate. Its function is as follows. Is required not only for elongation of protein synthesis but also for the initiation of all mRNA translation through initiator tRNA(fMet) aminoacylation. The polypeptide is Methionine--tRNA ligase (Rickettsia typhi (strain ATCC VR-144 / Wilmington)).